The primary structure comprises 399 residues: L-asparaginase-like protein GE13669 (399 aa).

The first 22 residues, 1–22 (MLAQSCCLRLLILLLLFKSTCS), serve as a signal peptide directing secretion. 3 cysteine pairs are disulfide-bonded: cysteine 90–cysteine 95, cysteine 189–cysteine 205, and cysteine 344–cysteine 371.

The protein belongs to the Ntn-hydrolase family.

This is L-asparaginase-like protein GE13669 from Drosophila yakuba (Fruit fly).